A 113-amino-acid chain; its full sequence is Nucleoid-associated protein THA_1374 (113 aa).

It belongs to the YbaB/EbfC family. As to quaternary structure, homodimer.

It is found in the cytoplasm. Its subcellular location is the nucleoid. Functionally, binds to DNA and alters its conformation. May be involved in regulation of gene expression, nucleoid organization and DNA protection. This chain is Nucleoid-associated protein THA_1374, found in Thermosipho africanus (strain TCF52B).